Consider the following 1415-residue polypeptide: DNA-directed RNA polymerase subunit beta' (1415 aa).

4 residues coordinate Zn(2+): Cys72, Cys74, Cys87, and Cys90. Mg(2+) contacts are provided by Asp463, Asp465, and Asp467. Cys811, Cys885, Cys892, and Cys895 together coordinate Zn(2+).

Belongs to the RNA polymerase beta' chain family. The RNAP catalytic core consists of 2 alpha, 1 beta, 1 beta' and 1 omega subunit. When a sigma factor is associated with the core the holoenzyme is formed, which can initiate transcription. The cofactor is Mg(2+). Requires Zn(2+) as cofactor.

The enzyme catalyses RNA(n) + a ribonucleoside 5'-triphosphate = RNA(n+1) + diphosphate. In terms of biological role, DNA-dependent RNA polymerase catalyzes the transcription of DNA into RNA using the four ribonucleoside triphosphates as substrates. This is DNA-directed RNA polymerase subunit beta' from Cereibacter sphaeroides (strain ATCC 17025 / ATH 2.4.3) (Rhodobacter sphaeroides).